A 153-amino-acid chain; its full sequence is Neuromedin-S (153 aa).

The first 26 residues, 1 to 26 (MKHLRPQFPLILAIYCFCMLQIPSSG), serve as a signal peptide directing secretion. 3 propeptides span residues 27–69 (FPQP…IYKR), 70–105 (FLFH…ANRR), and 106–108 (MKR). Asn141 carries the asparagine amide modification. The propeptide occupies 144-153 (NIEDEAQIQW).

The protein belongs to the NmU family.

The protein resides in the secreted. Functionally, implicated in the regulation of circadian rhythms through autocrine and/or paracrine actions. The protein is Neuromedin-S (NMS) of Homo sapiens (Human).